A 1373-amino-acid chain; its full sequence is TAL effector protein PthXo1 (1373 aa).

Disordered stretches follow at residues 1-68 (MDPI…SAGS) and 127-152 (AARP…PAAQ). A compositionally biased stretch (basic residues) spans 131 to 141 (PRAKPAPRRRA). The span at 142-152 (AQPSDASPAAQ) shows a compositional bias: low complexity. The Cryptic repeat -1 repeat unit spans residues 221–239 (THEDIVGVGKQWSGARALE). Residues 256 to 273 (DTGQLVKIAKRGGVTAVE) form a Cryptic repeat 0 repeat. Core repeat repeat units follow at residues 289-322 (LTPA…QAHG), 323-356 (LTPA…QAHG), 357-390 (LPPD…QAHG), 391-424 (LTPD…QAHG), 425-458 (LTPD…QAHG), 459-492 (LTPD…QAHG), 493-525 (LTPD…QAHG), 526-559 (LTPD…QTHG), 560-593 (LTPA…QAHG), 594-627 (LTPD…QAHG), 628-661 (LTPD…QAHG), 662-695 (LTPD…QAHG), 696-729 (LTQV…QAHG), 730-763 (LTPA…QAHG), 764-797 (LTPD…QAHG), 798-831 (LTQE…QAHG), 832-865 (LTPD…QAHG), 866-899 (LTPA…QDHG), 900-933 (LTLA…QAHG), 934-967 (LTQD…QDHG), 968-1001 (LTPD…QDHG), 1002-1034 (LTLD…QDHG), and 1035-1068 (LTPD…QDHG). HEAT repeat units follow at residues 714 to 760 (LETV…VLCQ), 782 to 828 (LETV…VLCQ), 850 to 893 (LETV…LLPV), and 918 to 961 (LETV…LLPV). The HEAT 5 repeat unit spans residues 1053–1091 (LETVQRLLPVLCQDHGLTPNQVVAIASNGGKQALESIVA). Residues 1069–1087 (LTPNQVVAIASNGGKQALE) form a Core repeat 23.5 repeat. Positions 1136–1364 (RVNRRIGERT…ELAWLMELLP (229 aa)) are acidic activation domain. Positions 1222–1225 (KRAK) match the Nuclear localization signal NLS1 motif. Residues 1250-1286 (LDAPSPMHEGDQTGASSRKRSRSDRAVTGPSAQHSFE) form a disordered region. Residues 1268 to 1271 (KRSR) carry the Nuclear localization signal NLS2 motif. Positions 1305–1308 (KRPR) match the Nuclear localization signal NLS3 motif.

It belongs to the transcription activator-like effector (TALE) family.

It is found in the secreted. Its subcellular location is the host nucleus. Avirulence protein. Acts as a transcription factor in rice, inducing expression of a number of host genes including SWEET11 (Os8N3, XA13, AC Q6YZF3) in susceptible plants with the Xa13 allele. Plants with the xa13 allele, which has an altered promoter, are resistant to bacterial blight caused by this bacterial strain and do not induce SWEET11. The xa13 allele elicits an atypical hypersensitive response (HR). PthXo1 binds SWEET11 promoter DNA in a sequence-specific manner. The sequence is that of TAL effector protein PthXo1 (pthXo1) from Xanthomonas oryzae pv. oryzae (strain PXO99A).